We begin with the raw amino-acid sequence, 461 residues long: Putative dipeptidase CPSG_01350 (461 aa).

Residues 1–10 (MSARDNEKGS) are compositionally biased toward basic and acidic residues. Residues 1–31 (MSARDNEKGSARSQPSHAAASEIENVPRPSR) form a disordered region. A helical membrane pass occupies residues 35-52 (WTGTMIKVFIICACAGIV). Positions 90, 92, and 203 each coordinate Zn(2+). A disulfide bond links cysteine 142 and cysteine 232. Histidine 230 contacts substrate. Histidine 274 and histidine 295 together coordinate Zn(2+). Positions 306 and 366 each coordinate substrate. Residue asparagine 379 is glycosylated (N-linked (GlcNAc...) asparagine).

Belongs to the metallo-dependent hydrolases superfamily. Peptidase M19 family. Zn(2+) is required as a cofactor.

The protein resides in the membrane. The enzyme catalyses an L-aminoacyl-L-amino acid + H2O = 2 an L-alpha-amino acid. In terms of biological role, hydrolyzes a wide range of dipeptides. This Coccidioides posadasii (strain RMSCC 757 / Silveira) (Valley fever fungus) protein is Putative dipeptidase CPSG_01350.